Here is an 891-residue protein sequence, read N- to C-terminus: Targeting protein for Xklp2 homolog (891 aa).

Residues 42–54 (HENGVPLTFDDKA) are compositionally biased toward basic and acidic residues. 5 disordered regions span residues 42-310 (HENG…KSCP), 418-454 (NLRK…SFSG), 472-518 (HTKT…NRHR), 723-746 (CSGV…AEKG), and 789-891 (STKP…SHTS). Positions 108–124 (DDVSSAESETCEMSTDS) are enriched in polar residues. Acidic residues predominate over residues 141–154 (DDEATVQESSDAEE). Residues 155–173 (TQTLPSSCVDSSTAEMSTD) are compositionally biased toward polar residues. Basic residues predominate over residues 236-246 (PTRKSPRLHSR). A compositionally biased stretch (basic and acidic residues) spans 442–454 (DNRKRTHEESFSG). Residues 791–802 (KPMTDISNFSLN) are compositionally biased toward polar residues. Basic and acidic residues-rich tracts occupy residues 803–822 (TERR…ERQL) and 831–852 (REAE…DSIH).

Belongs to the TPX2 family. In terms of tissue distribution, detectable in immature oocytes.

Its subcellular location is the nucleus. The protein resides in the cytoplasm. It localises to the cytoskeleton. It is found in the spindle. Spindle assembly factor. Required for normal assembly of mitotic spindles. The sequence is that of Targeting protein for Xklp2 homolog from Patiria pectinifera (Starfish).